The primary structure comprises 614 residues: Probable Xaa-Pro aminopeptidase P (614 aa).

Asp-411, Asp-422, Glu-520, and Glu-534 together coordinate Mn(2+).

Belongs to the peptidase M24B family. Mn(2+) serves as cofactor.

It catalyses the reaction Release of any N-terminal amino acid, including proline, that is linked to proline, even from a dipeptide or tripeptide.. In terms of biological role, catalyzes the removal of a penultimate prolyl residue from the N-termini of peptides. The chain is Probable Xaa-Pro aminopeptidase P (AMPP) from Sordaria macrospora (strain ATCC MYA-333 / DSM 997 / K(L3346) / K-hell).